The following is a 363-amino-acid chain: 3-isopropylmalate dehydrogenase (363 aa).

Gly78–Glu91 is an NAD(+) binding site. Arg99, Arg109, Arg138, and Asp227 together coordinate substrate. Mg(2+) contacts are provided by Asp227, Asp251, and Asp255. Gly285 to Asn297 provides a ligand contact to NAD(+).

The protein belongs to the isocitrate and isopropylmalate dehydrogenases family. LeuB type 1 subfamily. Homodimer. It depends on Mg(2+) as a cofactor. The cofactor is Mn(2+).

The protein localises to the cytoplasm. The enzyme catalyses (2R,3S)-3-isopropylmalate + NAD(+) = 4-methyl-2-oxopentanoate + CO2 + NADH. It participates in amino-acid biosynthesis; L-leucine biosynthesis; L-leucine from 3-methyl-2-oxobutanoate: step 3/4. In terms of biological role, catalyzes the oxidation of 3-carboxy-2-hydroxy-4-methylpentanoate (3-isopropylmalate) to 3-carboxy-4-methyl-2-oxopentanoate. The product decarboxylates to 4-methyl-2 oxopentanoate. The protein is 3-isopropylmalate dehydrogenase (leuB) of Buchnera aphidicola subsp. Rhopalosiphum padi.